The following is a 314-amino-acid chain: 4-hydroxy-3-methylbut-2-enyl diphosphate reductase (314 aa).

Cys-12 serves as a coordination point for [4Fe-4S] cluster. Residues His-41 and His-74 each coordinate (2E)-4-hydroxy-3-methylbut-2-enyl diphosphate. 2 residues coordinate dimethylallyl diphosphate: His-41 and His-74. 2 residues coordinate isopentenyl diphosphate: His-41 and His-74. A [4Fe-4S] cluster-binding site is contributed by Cys-96. His-124 is a (2E)-4-hydroxy-3-methylbut-2-enyl diphosphate binding site. His-124 lines the dimethylallyl diphosphate pocket. His-124 provides a ligand contact to isopentenyl diphosphate. The active-site Proton donor is Glu-126. Position 167 (Thr-167) interacts with (2E)-4-hydroxy-3-methylbut-2-enyl diphosphate. Cys-197 serves as a coordination point for [4Fe-4S] cluster. 4 residues coordinate (2E)-4-hydroxy-3-methylbut-2-enyl diphosphate: Ser-225, Ser-226, Asn-227, and Ser-269. 4 residues coordinate dimethylallyl diphosphate: Ser-225, Ser-226, Asn-227, and Ser-269. 4 residues coordinate isopentenyl diphosphate: Ser-225, Ser-226, Asn-227, and Ser-269.

This sequence belongs to the IspH family. Requires [4Fe-4S] cluster as cofactor.

It carries out the reaction isopentenyl diphosphate + 2 oxidized [2Fe-2S]-[ferredoxin] + H2O = (2E)-4-hydroxy-3-methylbut-2-enyl diphosphate + 2 reduced [2Fe-2S]-[ferredoxin] + 2 H(+). The enzyme catalyses dimethylallyl diphosphate + 2 oxidized [2Fe-2S]-[ferredoxin] + H2O = (2E)-4-hydroxy-3-methylbut-2-enyl diphosphate + 2 reduced [2Fe-2S]-[ferredoxin] + 2 H(+). It participates in isoprenoid biosynthesis; dimethylallyl diphosphate biosynthesis; dimethylallyl diphosphate from (2E)-4-hydroxy-3-methylbutenyl diphosphate: step 1/1. The protein operates within isoprenoid biosynthesis; isopentenyl diphosphate biosynthesis via DXP pathway; isopentenyl diphosphate from 1-deoxy-D-xylulose 5-phosphate: step 6/6. In terms of biological role, catalyzes the conversion of 1-hydroxy-2-methyl-2-(E)-butenyl 4-diphosphate (HMBPP) into a mixture of isopentenyl diphosphate (IPP) and dimethylallyl diphosphate (DMAPP). Acts in the terminal step of the DOXP/MEP pathway for isoprenoid precursor biosynthesis. The chain is 4-hydroxy-3-methylbut-2-enyl diphosphate reductase from Psychromonas ingrahamii (strain DSM 17664 / CCUG 51855 / 37).